The following is a 550-amino-acid chain: Arginine--tRNA ligase (550 aa).

The 'HIGH' region motif lies at 124–134; the sequence is ANPTGPLHVGH.

The protein belongs to the class-I aminoacyl-tRNA synthetase family. In terms of assembly, monomer.

It localises to the cytoplasm. It carries out the reaction tRNA(Arg) + L-arginine + ATP = L-arginyl-tRNA(Arg) + AMP + diphosphate. The chain is Arginine--tRNA ligase from Desulfovibrio desulfuricans (strain ATCC 27774 / DSM 6949 / MB).